The primary structure comprises 478 residues: MGSKSPEGHNQAPHGAPNALDKPANPAVKAQNGSGSADLDRGTISNDDDDADDDEKETQINGSSNAGRIYLFPSRPAKFQHRPTDTPSTPEKKKKKRKRSKKKAKPTEAKQTSPPRVPLSTLFPSGYPVGELVADDRTSRVTDEETRYNSRLWDDGFLADYRQAAEIHRQVRQYAQRELIKPGATLSSIADGIEDGVRALSGHQGLETGDGLNAGMGFPTGLCVNHVAAHWTPNPGAKEVVLEKSDVLKVDFGVHVNGRIVDSAFTVAFDPVYDNLLEAVKEATNTGIAHAGIDARVSDIGAAIQEVMESYELEIAGKSVPVKAIRNITGHNILRYHIHGGKQVPFIKNNRRDKMEEGEVFAIETFGSTGKGYLDDDFGIYGYGRNEHVPATGLRLASARSLVKTIDANFGSLVFSRRYLERLGVKSYHLAMKNLIDNGIVESYAPLVDVKGSYTAQFEHTILLHSGGKEVISRGDDY.

The segment at 1–124 is disordered; sequence MGSKSPEGHN…PRVPLSTLFP (124 aa). A compositionally biased stretch (acidic residues) spans 46–56; the sequence is NDDDDADDDEK. Residues 92–104 show a composition bias toward basic residues; it reads KKKKKRKRSKKKA. Residue His230 participates in substrate binding. The a divalent metal cation site is built by Asp251, Asp262, and His331. Residue His339 coordinates substrate. 2 residues coordinate a divalent metal cation: Glu364 and Glu459.

It belongs to the peptidase M24A family. Methionine aminopeptidase eukaryotic type 2 subfamily. The cofactor is Co(2+). It depends on Zn(2+) as a cofactor. Mn(2+) serves as cofactor. Fe(2+) is required as a cofactor.

Its subcellular location is the cytoplasm. The catalysed reaction is Release of N-terminal amino acids, preferentially methionine, from peptides and arylamides.. Its function is as follows. Cotranslationally removes the N-terminal methionine from nascent proteins. The N-terminal methionine is often cleaved when the second residue in the primary sequence is small and uncharged (Met-Ala-, Cys, Gly, Pro, Ser, Thr, or Val). This Aspergillus clavatus (strain ATCC 1007 / CBS 513.65 / DSM 816 / NCTC 3887 / NRRL 1 / QM 1276 / 107) protein is Methionine aminopeptidase 2-1.